We begin with the raw amino-acid sequence, 60 residues long: Large ribosomal subunit protein uL30 (60 aa).

The protein belongs to the universal ribosomal protein uL30 family. Part of the 50S ribosomal subunit.

The chain is Large ribosomal subunit protein uL30 from Streptomyces coelicolor (strain ATCC BAA-471 / A3(2) / M145).